We begin with the raw amino-acid sequence, 567 residues long: Geranylgeranyl transferase type-2 subunit alpha (567 aa).

6 PFTA repeats span residues 44–78 (LDES…RLEV), 88–122 (LVKA…RLPE), 124–158 (NWAR…QAAV), 159–193 (PPAE…QLHP), 207–241 (VLLK…RADP), and 363–397 (VLQS…ALDP). Phosphoserine is present on Ser98. LRR repeat units lie at residues 442–463 (DVRV…EQLL), 464–486 (LVTH…AALR), 487–508 (CLEV…TNLP), 509–530 (RLQE…QPLA), and 534–555 (RLVL…SEHL).

The protein belongs to the protein prenyltransferase subunit alpha family. Heterotrimer composed of RABGGTA, RABGGTB and CHM; within this trimer, RABGGTA and RABGGTB form the catalytic component B, while CHM (component A) mediates peptide substrate binding. The Rab GGTase dimer (RGGT) interacts with CHM (component A) prior to Rab protein binding; the association is stabilized by geranylgeranyl pyrophosphate (GGpp). The CHM:RGGT:Rab complex is destabilized by GGpp. Interacts with non-phosphorylated form of RAB8A; phosphorylation of RAB8A disrupts this interaction.

It catalyses the reaction geranylgeranyl diphosphate + L-cysteinyl-[protein] = S-geranylgeranyl-L-cysteinyl-[protein] + diphosphate. With respect to regulation, the enzymatic reaction requires the aid of a Rab escort protein (also called component A), such as CHM. Its function is as follows. Catalyzes the transfer of a geranylgeranyl moiety from geranylgeranyl diphosphate to both cysteines of Rab proteins with the C-terminal sequence -XXCC, -XCXC and -CCXX, such as RAB1A, RAB3A, RAB5A and RAB7A. The polypeptide is Geranylgeranyl transferase type-2 subunit alpha (RABGGTA) (Sus scrofa (Pig)).